Reading from the N-terminus, the 293-residue chain is Plant cysteine oxidase 1 (293 aa).

Positions 148, 150, and 211 each coordinate Fe cation. The interval 250–293 is disordered; that stretch reads SEDDDVLSSEEEKEGYAWLQERDDNPEDHTNVVGALYRGPKVED. The span at 251 to 262 shows a compositional bias: acidic residues; the sequence is EDDDVLSSEEEK. The span at 269–279 shows a compositional bias: basic and acidic residues; that stretch reads QERDDNPEDHT.

Belongs to the cysteine dioxygenase family. It depends on Fe(2+) as a cofactor.

The protein localises to the nucleus. It localises to the cytoplasm. It catalyses the reaction L-cysteine + O2 = 3-sulfino-L-alanine + H(+). Functionally, catalyzes the oxidation of N-terminal cysteine residues (N-Cys), thus preparing the protein for N-end rule pathway-mediated proteasomal degradation, upstream of the N-end rule enzymes ATE1, ATE2 and PRT6. Controls the preparation of the group VII ethylene response factor (ERF-VII) proteins for degradation via the 26S proteasome N-end rule pathway. Acts as an oxygen sensor that controls the stability of ERF-VII proteins, which are stabilized in flooding-induced hypoxia, and regulate transcriptional adaptation to these adverse conditions. Not active on Cys located inside or at the C-terminus of a peptide. Acts redundantly with PCO2 to repress the anaerobic response. This Arabidopsis thaliana (Mouse-ear cress) protein is Plant cysteine oxidase 1.